The primary structure comprises 300 residues: Small ribosomal subunit protein uS2 (300 aa).

Residues 278-300 are disordered; it reads GEAQTGNEGWGTEAAAPAATTQW.

The protein belongs to the universal ribosomal protein uS2 family. As to quaternary structure, component of the small ribosomal subunit. Mature ribosomes consist of a small (40S) and a large (60S) subunit. The 40S subunit contains about 33 different proteins and 1 molecule of RNA (18S). The 60S subunit contains about 49 different proteins and 3 molecules of RNA (25S, 5.8S and 5S). Interacts with rps21.

The protein localises to the cytoplasm. Its function is as follows. Required for the assembly and/or stability of the 40S ribosomal subunit. Required for the processing of the 20S rRNA-precursor to mature 18S rRNA in a late step of the maturation of 40S ribosomal subunits. This Pyrenophora tritici-repentis (strain Pt-1C-BFP) (Wheat tan spot fungus) protein is Small ribosomal subunit protein uS2 (rps0).